The following is a 178-amino-acid chain: Negative modulator of initiation of replication (178 aa).

The interval 113 to 117 is interaction with DNA; that stretch reads RTRVY.

Belongs to the SeqA family. In terms of assembly, homodimer. Polymerizes to form helical filaments.

The protein resides in the cytoplasm. Its function is as follows. Negative regulator of replication initiation, which contributes to regulation of DNA replication and ensures that replication initiation occurs exactly once per chromosome per cell cycle. Binds to pairs of hemimethylated GATC sequences in the oriC region, thus preventing assembly of replication proteins and re-initiation at newly replicated origins. Repression is relieved when the region becomes fully methylated. The polypeptide is Negative modulator of initiation of replication (Photobacterium profundum (strain SS9)).